The primary structure comprises 592 residues: Aspartate--tRNA ligase (592 aa).

Glu171 lines the L-aspartate pocket. The tract at residues 195 to 198 (QLFK) is aspartate. Arg217 contributes to the L-aspartate binding site. Residues 217–219 (RDE) and Gln226 each bind ATP. His448 contributes to the L-aspartate binding site. Glu482 contacts ATP. Position 489 (Arg489) interacts with L-aspartate. Residue 534–537 (GLDR) participates in ATP binding.

Belongs to the class-II aminoacyl-tRNA synthetase family. Type 1 subfamily. Homodimer.

The protein localises to the cytoplasm. The catalysed reaction is tRNA(Asp) + L-aspartate + ATP = L-aspartyl-tRNA(Asp) + AMP + diphosphate. In terms of biological role, catalyzes the attachment of L-aspartate to tRNA(Asp) in a two-step reaction: L-aspartate is first activated by ATP to form Asp-AMP and then transferred to the acceptor end of tRNA(Asp). This chain is Aspartate--tRNA ligase, found in Vibrio campbellii (strain ATCC BAA-1116).